The sequence spans 247 residues: ATP synthase subunit a (247 aa).

The next 6 helical transmembrane spans lie at 26–46 (ITNN…LFYV), 85–105 (YFPL…IGLL), 115–135 (IIFT…INFF), 141–161 (FFNL…LVVI), 178–198 (FANM…IFNV), and 205–225 (ISFL…CIAI).

It belongs to the ATPase A chain family. In terms of assembly, F-type ATPases have 2 components, CF(1) - the catalytic core - and CF(0) - the membrane proton channel. CF(1) has five subunits: alpha(3), beta(3), gamma(1), delta(1), epsilon(1). CF(0) has three main subunits: a, b and c.

It is found in the mitochondrion inner membrane. Its function is as follows. Mitochondrial membrane ATP synthase (F(1)F(0) ATP synthase or Complex V) produces ATP from ADP in the presence of a proton gradient across the membrane which is generated by electron transport complexes of the respiratory chain. F-type ATPases consist of two structural domains, F(1) - containing the extramembraneous catalytic core and F(0) - containing the membrane proton channel, linked together by a central stalk and a peripheral stalk. During catalysis, ATP synthesis in the catalytic domain of F(1) is coupled via a rotary mechanism of the central stalk subunits to proton translocation. Key component of the proton channel; it may play a direct role in the translocation of protons across the membrane. In Acanthamoeba castellanii (Amoeba), this protein is ATP synthase subunit a (ATP6).